Reading from the N-terminus, the 342-residue chain is MTDTDRLLSAGRRAEDVDAALRPRSLDEFVGQQAARDNLRVFIEAARQRGDALDHVLFFGPPGLGKTTLAQIIAKEMGAGFRATSGPVIAKSGDLAALLTNLEDGDVLFIDEIHRLQPQVEEVLYPAMEDRALDLMIGEGPSARSVRIDLPRFTLVGATTRQGLITTPLRDRFGIPIRLQFYTVEELERVVSRAARLLDLPIASDGAMEIARRARGTPRIAGRLLRRVRDFAHVLGADIVDAKVADQSLNRLEVDNLGLDAMDRRYLHMIADIYRGGPVGVETLAAGLSEPRDTIEDVIEPYLIQLGLIARTARGRCLNGRGWKHLGLNPPPEAGQDGLFDV.

Positions 4–182 (TDRLLSAGRR…FGIPIRLQFY (179 aa)) are large ATPase domain (RuvB-L). Leu21, Arg22, Gly63, Lys66, Thr67, Thr68, Arg172, Tyr182, and Arg219 together coordinate ATP. Residue Thr67 coordinates Mg(2+). The small ATPAse domain (RuvB-S) stretch occupies residues 183–253 (TVEELERVVS…VADQSLNRLE (71 aa)). The head domain (RuvB-H) stretch occupies residues 256-342 (NLGLDAMDRR…EAGQDGLFDV (87 aa)). Residues Arg292, Arg311, and Arg316 each contribute to the DNA site.

It belongs to the RuvB family. In terms of assembly, homohexamer. Forms an RuvA(8)-RuvB(12)-Holliday junction (HJ) complex. HJ DNA is sandwiched between 2 RuvA tetramers; dsDNA enters through RuvA and exits via RuvB. An RuvB hexamer assembles on each DNA strand where it exits the tetramer. Each RuvB hexamer is contacted by two RuvA subunits (via domain III) on 2 adjacent RuvB subunits; this complex drives branch migration. In the full resolvosome a probable DNA-RuvA(4)-RuvB(12)-RuvC(2) complex forms which resolves the HJ.

It localises to the cytoplasm. The catalysed reaction is ATP + H2O = ADP + phosphate + H(+). Its function is as follows. The RuvA-RuvB-RuvC complex processes Holliday junction (HJ) DNA during genetic recombination and DNA repair, while the RuvA-RuvB complex plays an important role in the rescue of blocked DNA replication forks via replication fork reversal (RFR). RuvA specifically binds to HJ cruciform DNA, conferring on it an open structure. The RuvB hexamer acts as an ATP-dependent pump, pulling dsDNA into and through the RuvAB complex. RuvB forms 2 homohexamers on either side of HJ DNA bound by 1 or 2 RuvA tetramers; 4 subunits per hexamer contact DNA at a time. Coordinated motions by a converter formed by DNA-disengaged RuvB subunits stimulates ATP hydrolysis and nucleotide exchange. Immobilization of the converter enables RuvB to convert the ATP-contained energy into a lever motion, pulling 2 nucleotides of DNA out of the RuvA tetramer per ATP hydrolyzed, thus driving DNA branch migration. The RuvB motors rotate together with the DNA substrate, which together with the progressing nucleotide cycle form the mechanistic basis for DNA recombination by continuous HJ branch migration. Branch migration allows RuvC to scan DNA until it finds its consensus sequence, where it cleaves and resolves cruciform DNA. In Rhizorhabdus wittichii (strain DSM 6014 / CCUG 31198 / JCM 15750 / NBRC 105917 / EY 4224 / RW1) (Sphingomonas wittichii), this protein is Holliday junction branch migration complex subunit RuvB.